The primary structure comprises 120 residues: Large ribosomal subunit protein bL17 (120 aa).

This sequence belongs to the bacterial ribosomal protein bL17 family. In terms of assembly, part of the 50S ribosomal subunit. Contacts protein L32.

This Mesomycoplasma hyopneumoniae (strain J / ATCC 25934 / NCTC 10110) (Mycoplasma hyopneumoniae) protein is Large ribosomal subunit protein bL17.